The chain runs to 259 residues: Caffeoyl-CoA O-methyltransferase 1 (259 aa).

Over residues 1-14 (MATTTTEATKTSST) the composition is skewed to low complexity. The disordered stretch occupies residues 1–29 (MATTTTEATKTSSTNGEDQKQSQNLRHQE). The residue at position 2 (A2) is an N-acetylalanine. A substrate-binding site is contributed by K33. Residues T75, E97, 99–100 (GV), S105, D123, and A152 contribute to the S-adenosyl-L-methionine site. D175 is a substrate binding site. D175 lines the a divalent metal cation pocket. S-adenosyl-L-methionine is bound at residue D177. 2 residues coordinate a divalent metal cation: D201 and N202. Residue N206 coordinates substrate.

This sequence belongs to the class I-like SAM-binding methyltransferase superfamily. Cation-dependent O-methyltransferase family. CCoAMT subfamily. It depends on a divalent metal cation as a cofactor. As to expression, expressed in stems and roots. Detected in leaves, siliques, flower buds, flowers. Expressed in the tapetum, but not in the endothecium. Detected in the vascular system of leaves and all flower organs, including stigma, stamens, petals and sepals.

The enzyme catalyses (E)-caffeoyl-CoA + S-adenosyl-L-methionine = (E)-feruloyl-CoA + S-adenosyl-L-homocysteine + H(+). It functions in the pathway aromatic compound metabolism; phenylpropanoid biosynthesis. In terms of biological role, methylates caffeoyl-CoA to feruloyl-CoA. Has a very low activity with caffeic acid and esculetin. Involved in scopoletin biosynthesis in roots. This Arabidopsis thaliana (Mouse-ear cress) protein is Caffeoyl-CoA O-methyltransferase 1 (CCOAOMT1).